The sequence spans 56 residues: Large ribosomal subunit protein bL33 (56 aa).

Belongs to the bacterial ribosomal protein bL33 family.

This chain is Large ribosomal subunit protein bL33, found in Histophilus somni (strain 129Pt) (Haemophilus somnus).